A 156-amino-acid polypeptide reads, in one-letter code: SsrA-binding protein (156 aa).

This sequence belongs to the SmpB family.

Its subcellular location is the cytoplasm. In terms of biological role, required for rescue of stalled ribosomes mediated by trans-translation. Binds to transfer-messenger RNA (tmRNA), required for stable association of tmRNA with ribosomes. tmRNA and SmpB together mimic tRNA shape, replacing the anticodon stem-loop with SmpB. tmRNA is encoded by the ssrA gene; the 2 termini fold to resemble tRNA(Ala) and it encodes a 'tag peptide', a short internal open reading frame. During trans-translation Ala-aminoacylated tmRNA acts like a tRNA, entering the A-site of stalled ribosomes, displacing the stalled mRNA. The ribosome then switches to translate the ORF on the tmRNA; the nascent peptide is terminated with the 'tag peptide' encoded by the tmRNA and targeted for degradation. The ribosome is freed to recommence translation, which seems to be the essential function of trans-translation. The protein is SsrA-binding protein of Thermoanaerobacter pseudethanolicus (strain ATCC 33223 / 39E) (Clostridium thermohydrosulfuricum).